Consider the following 314-residue polypeptide: MSFASDMKNELTRIDVDEKNARAELSALIRMNGALSLSNQQFVINVQTENATTARRIYSLIKKVFNIEVEILVRKKMKLKKNNIYICRTKVKSREILDELGILKDGVFTHAIDPDMIQDDEMKRSYLRGAFLAGGSVNNPETSSYHLEIFSLYENHSEGLAELMNEYELNAKHLERKKGSIVYLKEAEKISDFLSLIGGYQAMLKFEDVRIVRDMRNSVNRLVNCETANLNKTVSAAMRQVESIQLIDQEIGIENLPERLKEIAKLRVENQDVSLKELGEMVSTGTISKSGVNHRLRKLNELADKIRSGEHIDM.

The segment at residues 274–308 (SLKELGEMVSTGTISKSGVNHRLRKLNELADKIRS) is a DNA-binding region (H-T-H motif).

The protein belongs to the WhiA family.

Involved in cell division and chromosome segregation. This chain is Probable cell division protein WhiA, found in Staphylococcus carnosus (strain TM300).